A 284-amino-acid polypeptide reads, in one-letter code: 2-dehydro-3-deoxyphosphooctonate aldolase (284 aa).

It belongs to the KdsA family.

It is found in the cytoplasm. The enzyme catalyses D-arabinose 5-phosphate + phosphoenolpyruvate + H2O = 3-deoxy-alpha-D-manno-2-octulosonate-8-phosphate + phosphate. It participates in carbohydrate biosynthesis; 3-deoxy-D-manno-octulosonate biosynthesis; 3-deoxy-D-manno-octulosonate from D-ribulose 5-phosphate: step 2/3. It functions in the pathway bacterial outer membrane biogenesis; lipopolysaccharide biosynthesis. The polypeptide is 2-dehydro-3-deoxyphosphooctonate aldolase (Haemophilus influenzae (strain PittEE)).